The primary structure comprises 407 residues: Bifunctional enzyme IspD/IspF (407 aa).

The tract at residues 1-246 (MQPLAEATTI…RQDHVSFPDI (246 aa)) is 2-C-methyl-D-erythritol 4-phosphate cytidylyltransferase. Residues 247–407 (RTGNGYDVHS…TVIYPGEVPE (161 aa)) are 2-C-methyl-D-erythritol 2,4-cyclodiphosphate synthase. A divalent metal cation is bound by residues aspartate 253 and histidine 255. 4-CDP-2-C-methyl-D-erythritol 2-phosphate-binding positions include 253-255 (DVH) and 279-280 (HS). Histidine 287 is an a divalent metal cation binding site. 4-CDP-2-C-methyl-D-erythritol 2-phosphate is bound by residues 301–303 (DIG), 377–380 (TTNE), phenylalanine 384, and arginine 387.

In the N-terminal section; belongs to the IspD/TarI cytidylyltransferase family. IspD subfamily. It in the C-terminal section; belongs to the IspF family. It depends on a divalent metal cation as a cofactor.

It catalyses the reaction 2-C-methyl-D-erythritol 4-phosphate + CTP + H(+) = 4-CDP-2-C-methyl-D-erythritol + diphosphate. The catalysed reaction is 4-CDP-2-C-methyl-D-erythritol 2-phosphate = 2-C-methyl-D-erythritol 2,4-cyclic diphosphate + CMP. Its pathway is isoprenoid biosynthesis; isopentenyl diphosphate biosynthesis via DXP pathway; isopentenyl diphosphate from 1-deoxy-D-xylulose 5-phosphate: step 2/6. It participates in isoprenoid biosynthesis; isopentenyl diphosphate biosynthesis via DXP pathway; isopentenyl diphosphate from 1-deoxy-D-xylulose 5-phosphate: step 4/6. Bifunctional enzyme that catalyzes the formation of 4-diphosphocytidyl-2-C-methyl-D-erythritol from CTP and 2-C-methyl-D-erythritol 4-phosphate (MEP) (IspD), and catalyzes the conversion of 4-diphosphocytidyl-2-C-methyl-D-erythritol 2-phosphate (CDP-ME2P) to 2-C-methyl-D-erythritol 2,4-cyclodiphosphate (ME-CPP) with a corresponding release of cytidine 5-monophosphate (CMP) (IspF). The polypeptide is Bifunctional enzyme IspD/IspF (Brucella anthropi (strain ATCC 49188 / DSM 6882 / CCUG 24695 / JCM 21032 / LMG 3331 / NBRC 15819 / NCTC 12168 / Alc 37) (Ochrobactrum anthropi)).